The sequence spans 318 residues: Adenylate isopentenyltransferase 4 (318 aa).

Position 12-19 (12-19) interacts with ATP; the sequence is GATGSGKS.

It belongs to the IPP transferase family. Mg(2+) serves as cofactor. In terms of tissue distribution, expressed in immature seeds with highest expression in the chalazal endosperm.

It localises to the cytoplasm. It catalyses the reaction dimethylallyl diphosphate + ADP = N(6)-(dimethylallyl)adenosine 5'-diphosphate + diphosphate. The catalysed reaction is dimethylallyl diphosphate + ATP = N(6)-(dimethylallyl)adenosine 5'-triphosphate + diphosphate. In terms of biological role, involved in cytokinin biosynthesis. Catalyzes the transfer of an isopentenyl group from dimethylallyl diphosphate (DMAPP) to ATP and ADP, but not to AMP. Has no DMAPP:tRNA isopentenyltransferase activity. This chain is Adenylate isopentenyltransferase 4 (IPT4), found in Arabidopsis thaliana (Mouse-ear cress).